The primary structure comprises 264 residues: Thymidylate synthase (264 aa).

Residue R21 coordinates dUMP. A (6R)-5,10-methylene-5,6,7,8-tetrahydrofolate-binding site is contributed by H51. A dUMP-binding site is contributed by 126–127; it reads RR. Residue C146 is the Nucleophile of the active site. Residues 166–169, N177, and 207–209 each bind dUMP; these read RSGD and HLY. D169 contacts (6R)-5,10-methylene-5,6,7,8-tetrahydrofolate. A (6R)-5,10-methylene-5,6,7,8-tetrahydrofolate-binding site is contributed by A263.

Belongs to the thymidylate synthase family. Bacterial-type ThyA subfamily. Homodimer.

The protein localises to the cytoplasm. The enzyme catalyses dUMP + (6R)-5,10-methylene-5,6,7,8-tetrahydrofolate = 7,8-dihydrofolate + dTMP. It functions in the pathway pyrimidine metabolism; dTTP biosynthesis. Functionally, catalyzes the reductive methylation of 2'-deoxyuridine-5'-monophosphate (dUMP) to 2'-deoxythymidine-5'-monophosphate (dTMP) while utilizing 5,10-methylenetetrahydrofolate (mTHF) as the methyl donor and reductant in the reaction, yielding dihydrofolate (DHF) as a by-product. This enzymatic reaction provides an intracellular de novo source of dTMP, an essential precursor for DNA biosynthesis. This Xanthomonas axonopodis pv. citri (strain 306) protein is Thymidylate synthase.